Reading from the N-terminus, the 441-residue chain is 23S rRNA (uracil(1939)-C(5))-methyltransferase RlmD (441 aa).

Positions 10-68 constitute a TRAM domain; that stretch reads KPLKQQSLVLDITAMDHHGRGIAKHNNKVCFVSNALPNEQVKATIIADKARYSEAQTHK. C81, C87, C90, and C169 together coordinate [4Fe-4S] cluster. S-adenosyl-L-methionine is bound by residues Q274, F303, N308, E324, D351, and D372. C398 (nucleophile) is an active-site residue.

This sequence belongs to the class I-like SAM-binding methyltransferase superfamily. RNA M5U methyltransferase family. RlmD subfamily.

The catalysed reaction is uridine(1939) in 23S rRNA + S-adenosyl-L-methionine = 5-methyluridine(1939) in 23S rRNA + S-adenosyl-L-homocysteine + H(+). Its function is as follows. Catalyzes the formation of 5-methyl-uridine at position 1939 (m5U1939) in 23S rRNA. This is 23S rRNA (uracil(1939)-C(5))-methyltransferase RlmD from Pseudoalteromonas translucida (strain TAC 125).